Reading from the N-terminus, the 277-residue chain is Large ribosomal subunit protein uL2 (277 aa).

Disordered stretches follow at residues 36 to 58 (PLHKKGGRNNQGKLTVRHQGGGH) and 219 to 277 (TVRG…RKNK). Basic residues predominate over residues 258 to 277 (KTRKKKNKSDKFIVRRRKNK).

Belongs to the universal ribosomal protein uL2 family. Part of the 50S ribosomal subunit. Forms a bridge to the 30S subunit in the 70S ribosome.

One of the primary rRNA binding proteins. Required for association of the 30S and 50S subunits to form the 70S ribosome, for tRNA binding and peptide bond formation. It has been suggested to have peptidyltransferase activity; this is somewhat controversial. Makes several contacts with the 16S rRNA in the 70S ribosome. In Bacillus velezensis (strain DSM 23117 / BGSC 10A6 / LMG 26770 / FZB42) (Bacillus amyloliquefaciens subsp. plantarum), this protein is Large ribosomal subunit protein uL2.